Here is a 498-residue protein sequence, read N- to C-terminus: Glycerol kinase (498 aa).

Thr13 is a binding site for ADP. 3 residues coordinate ATP: Thr13, Thr14, and Ser15. Thr13 is a sn-glycerol 3-phosphate binding site. Position 17 (Arg17) interacts with ADP. Sn-glycerol 3-phosphate-binding residues include Arg83, Glu84, Tyr135, and Asp244. Residues Arg83, Glu84, Tyr135, Asp244, and Gln245 each coordinate glycerol. Residues Thr266 and Gly309 each contribute to the ADP site. The ATP site is built by Thr266, Gly309, Gln313, and Gly410. Gly410 and Asn414 together coordinate ADP.

The protein belongs to the FGGY kinase family. Homotetramer and homodimer (in equilibrium).

The catalysed reaction is glycerol + ATP = sn-glycerol 3-phosphate + ADP + H(+). It participates in polyol metabolism; glycerol degradation via glycerol kinase pathway; sn-glycerol 3-phosphate from glycerol: step 1/1. Its activity is regulated as follows. Activated by phosphorylation and inhibited by fructose 1,6-bisphosphate (FBP). In terms of biological role, key enzyme in the regulation of glycerol uptake and metabolism. Catalyzes the phosphorylation of glycerol to yield sn-glycerol 3-phosphate. This Symbiobacterium thermophilum (strain DSM 24528 / JCM 14929 / IAM 14863 / T) protein is Glycerol kinase.